Here is a 25-residue protein sequence, read N- to C-terminus: Defensin D3 (25 aa).

It belongs to the DEFL family. Group IV subfamily. Distributed in the epidermal cell layer of leaves and in the subepidermal layer region of stems. Not in roots.

It localises to the secreted. Its subcellular location is the cell wall. Its function is as follows. Antimicrobial peptide. Active against Fusarium spp., Gram-positive and Gram-negative bacterial pathogens. The chain is Defensin D3 from Spinacia oleracea (Spinach).